Here is a 125-residue protein sequence, read N- to C-terminus: Calcitonin receptor-stimulating peptide 3 (125 aa).

The signal sequence occupies residues 1–25; that stretch reads MGFWKFPPFLILSILVLYQAGMLHA. Residues 26-79 constitute a propeptide that is removed on maturation; sequence APFRMALGSSFDSATLTEEEMSLLLVAMVKDYVQMKATVLEQETEDFSITTQER. C81 and C86 are joined by a disulfide. The residue at position 116 (L116) is a Leucine amide. The propeptide occupies 122–125; it reads QPQA.

Belongs to the calcitonin family. In terms of tissue distribution, mainly expressed in the thyroid gland and CNS. Found in the nerve cells of cerebrum, hippocampus, hypothalamus, pons/midbrain and thalamus.

The protein resides in the secreted. This Sus scrofa (Pig) protein is Calcitonin receptor-stimulating peptide 3 (CRSP3).